The chain runs to 82 residues: UPF0291 protein PEPE_0871 (82 aa).

Belongs to the UPF0291 family.

It localises to the cytoplasm. This is UPF0291 protein PEPE_0871 from Pediococcus pentosaceus (strain ATCC 25745 / CCUG 21536 / LMG 10740 / 183-1w).